The primary structure comprises 291 residues: Bis(5'-nucleosyl)-tetraphosphatase, symmetrical (291 aa).

This sequence belongs to the Ap4A hydrolase family.

It carries out the reaction P(1),P(4)-bis(5'-adenosyl) tetraphosphate + H2O = 2 ADP + 2 H(+). In terms of biological role, hydrolyzes diadenosine 5',5'''-P1,P4-tetraphosphate to yield ADP. The chain is Bis(5'-nucleosyl)-tetraphosphatase, symmetrical from Pseudomonas syringae pv. syringae (strain B728a).